A 296-amino-acid chain; its full sequence is 4-hydroxy-tetrahydrodipicolinate synthase (296 aa).

Thr45 lines the pyruvate pocket. Tyr133 serves as the catalytic Proton donor/acceptor. The active-site Schiff-base intermediate with substrate is Lys161. Ile203 contributes to the pyruvate binding site.

The protein belongs to the DapA family. As to quaternary structure, homotetramer; dimer of dimers.

It localises to the cytoplasm. The catalysed reaction is L-aspartate 4-semialdehyde + pyruvate = (2S,4S)-4-hydroxy-2,3,4,5-tetrahydrodipicolinate + H2O + H(+). Its pathway is amino-acid biosynthesis; L-lysine biosynthesis via DAP pathway; (S)-tetrahydrodipicolinate from L-aspartate: step 3/4. Its function is as follows. Catalyzes the condensation of (S)-aspartate-beta-semialdehyde [(S)-ASA] and pyruvate to 4-hydroxy-tetrahydrodipicolinate (HTPA). In Idiomarina loihiensis (strain ATCC BAA-735 / DSM 15497 / L2-TR), this protein is 4-hydroxy-tetrahydrodipicolinate synthase.